Consider the following 258-residue polypeptide: MAKRLDLKGVNIYYGSFHAVAEVTLSVLPRSVTAFIGPSGCGKTTVLRTLNRMHEVVPGGRVEGSLLLDDEDIYGPGVDPVGVRRAIGMVFQRPNPFPAMSIRDNVVAGLKLQGVRNRKVLDETAEYSLRGANLWDEVKDRLDRPGGGLSGGQQQRLCIARAIAVQPDVLLMDEPCSALDPISTMAIEELISELKQDYTIVIVTHNMQQAARVSDYTAFFNLEAVGKPGRLIEVDDTEKIFSNPSQKATEDYISGRFG.

The ABC transporter domain occupies 5–247 (LDLKGVNIYY…EKIFSNPSQK (243 aa)). 37–44 (GPSGCGKT) lines the ATP pocket.

This sequence belongs to the ABC transporter superfamily. Phosphate importer (TC 3.A.1.7) family. In terms of assembly, the complex is composed of two ATP-binding proteins (PstB), two transmembrane proteins (PstC and PstA) and a solute-binding protein (PstS).

It is found in the cell membrane. The catalysed reaction is phosphate(out) + ATP + H2O = ADP + 2 phosphate(in) + H(+). In terms of biological role, part of the ABC transporter complex PstSACB involved in phosphate import. Responsible for energy coupling to the transport system. This is Phosphate import ATP-binding protein PstB from Mycolicibacterium paratuberculosis (strain ATCC BAA-968 / K-10) (Mycobacterium paratuberculosis).